Here is a 326-residue protein sequence, read N- to C-terminus: Methyltransferase phqN (326 aa).

Belongs to the class I-like SAM-binding methyltransferase superfamily. Erg6/SMT family.

The protein operates within alkaloid biosynthesis. Its function is as follows. Methyltransferase; part of the gene cluster that mediates the biosynthesis of paraherquamide, a fungal indole alkaloid that belongs to a family of natural products containing a characteristic bicyclo[2.2.2]diazaoctane core. The first steps in the biosynthesis of paraherquamide is the production of the beta-methyl-proline precursor from L-isoleucine. They require oxidation of a terminally hydroxylated L-isoleucine to the corresponding aldehyde by enzymes which have still to be identified. Spontaneous cyclization and dehydration would yield the 4-methyl pyrolline-5-carboxylic acid, which is then reduced by the pyrroline-5-carboxylate reductase phqD leading to the beta-methyl-proline precursor. The next step of paraherquamide biosynthesis involves coupling of beta-methyl-proline and L-tryptophan by the bimodular NRPS phqB, to produce a monooxopiperazine intermediate. The reductase (R) domain of phqB utilizes NADPH for hydride transfer to reduce the thioester bond of the T domain-tethered linear dipeptide to a hemithioaminal intermediate, which spontaneously cleaves the C-S bond to release the aldehyde product. This compound undergoes spontaneous cyclization and dehydration to give a dienamine which is reverse prenylated at C-2 by the reverse prenyltransferase phqJ. The other prenyltransferase present in the cluster, phqI may be a redundant gene in the pathway. During biosynthetic assembly, the key step to produce the polycyclic core is catalyzed by the bifunctional reductase and intramolecular [4+2] Diels-Alderase, phqE, resulting in formation of the [2.2.2] diazaoctane intermediate preparaherquamide. Following formation of preparaherquamide, an indole 2,3-epoxidation-initiated pinacol-like rearrangement is catalyzed by the phqK FAD-dependent monooxygenase. The prenyltransferase phqA, the cytochrome P450 monooxygenase phqL, and the FAD-linked oxidoreductase phqH (or the cytochrome P450 monooxygenase phqM), are proposed to be involved in the formation of the pyran ring. The FAD-dependent monooxygenase phqK is likely responsible for generation of the spiro-oxindole, and the N-methylation is likely mediated by the phqN methyltransferase leading to the isolable natural product paraherquamide F. However, the order of these biosynthetic steps has still to be determined. In late-stage paraherquamide biosynthesis, the third P450 monooxygenase, phqO, is probably responsible for the C-14 hydroxylation, transforming paraherquamide F to paraherquamide G, and paraherquamide E to the final product paraherquamide A. The expansion from the 6-membered ring pyran (in paraherquamides F and G) to the 7-membered dioxepin ring (in paraherquamides A and E) represents a poorly understood but intriguing process that probably involves the 2-oxoglutarate-dependent dioxygenase phqC. Finally, the remaining members of the paraherquamide cluster, including phqI as well as phqM (or phqH), do not have a clearly prescribed role and appear to be redundant. This is Methyltransferase phqN from Penicillium fellutanum.